The chain runs to 257 residues: MEFRGHDEPVDEMGVAYGRTPPSSSSSPAASASAGNGAGAAEVRYHECLRNHAAAMGGHVVDGCGEFMPMPGDAADALKCAACGCHRSFHRKDDGQQQQQLRLLIPSPPTPRVPLLMPPPQPQPHPHPHPQHPYLHPPFPYHHTPSGSGGTTTESSSEERGPPSSSAAAAQGRRKRFRTKFTPEQKEQMLAFAERVGWRMQKQDEALVEQFCAQVGVRRQVFKVWMHNNKSSIGSSSGGGSRRQPQEQQSQQQQQQQ.

Residues 1-35 (MEFRGHDEPVDEMGVAYGRTPPSSSSSPAASASAG) form a disordered region. A compositionally biased stretch (low complexity) spans 21–35 (PPSSSSSPAASASAG). The ZF-HD dimerization-type; degenerate zinc finger occupies 45-93 (YHECLRNHAAAMGGHVVDGCGEFMPMPGDAADALKCAACGCHRSFHRKD). Residues 106-125 (PSPPTPRVPLLMPPPQPQPH) are compositionally biased toward pro residues. Disordered stretches follow at residues 106–182 (PSPP…TKFT) and 228–257 (NNKS…QQQQ). A compositionally biased stretch (low complexity) spans 141 to 155 (YHHTPSGSGGTTTES). The homeobox DNA-binding region spans 174 to 237 (RKRFRTKFTP…NNKSSIGSSS (64 aa)). A compositionally biased stretch (low complexity) spans 242-257 (RRQPQEQQSQQQQQQQ).

Homo- and heterodimer with other ZFHD proteins.

It localises to the nucleus. Functionally, putative transcription factor. The chain is Zinc-finger homeodomain protein 6 (ZHD6) from Oryza sativa subsp. indica (Rice).